Consider the following 653-residue polypeptide: MPPPFPTATAAASTTSHLALLLLLSSSSVFFLYKSLRLRRNNPPSPPPGQGPAPTPTLLYASATGTSKALAAGLSRRLAEAGVTAHPADAAAFDPDDLPSLPLLLLVLPTHDGGAPPPAAAFLARWLEESAADFRAGAALLSGLRFAVFGVGSRAYGETFNAAARSFSRWLRALGAAEVVAVGEGDVDGGDLEVVFEEWCGRVVRVVKGEEIGEGHNGESDGFDELEEEESDDDDDEEEVDGGEVDMEDIAGKAPAARRRNGKVEGALSNGGENGVRDMVTPIIRTSLEKQGYKIIGSHSGVKICRWTKSQLRGRGGCYKHSFYGIESHRCMEATPSLACANKCVFCWRHHTNPVGKSWKWKMDDPLDIVNAAIDQHTKMVKQMKGVPGVKPERLAEGLSPRHCALSLVGEPIMYPEINVLIDELHRRHISTFLVTNAQFPDKIKTLKPITQLYVSVDAATKESLKAVDRPLFSDFWERFLDSLKSLHDKDQRTVYRLTLVKGWNAEEIDGYAKLLSLGQPDFIEIKGVTYCGSSATSKLTMENVPWHSDVKDFSEALALKSGGVYEVACEHAHSCCVLLAKVDKFKINGKWHTWIDYDRFHELVTSGKPFRSQDYMALTPSWAVYGAEEGGFDPDQSRYKKERRHGAAALKD.

Residues 56–204 (PTLLYASATG…VFEEWCGRVV (149 aa)) form the Flavodoxin-like domain. Residues 62–66 (SATGT) and 148–180 (VFGV…AEVV) contribute to the FMN site. Positions 211–276 (EIGEGHNGES…ALSNGGENGV (66 aa)) are disordered. A compositionally biased stretch (acidic residues) spans 221 to 249 (DGFDELEEEESDDDDDEEEVDGGEVDMED). The region spanning 324-567 (YGIESHRCME…LALKSGGVYE (244 aa)) is the Radical SAM core domain. [4Fe-4S] cluster-binding residues include C340, C344, and C347. A disordered region spans residues 630-653 (EGGFDPDQSRYKKERRHGAAALKD).

Belongs to the TYW1 family. [4Fe-4S] cluster serves as cofactor.

The enzyme catalyses N(1)-methylguanosine(37) in tRNA(Phe) + pyruvate + S-adenosyl-L-methionine = 4-demethylwyosine(37) in tRNA(Phe) + 5'-deoxyadenosine + L-methionine + CO2 + H2O. It participates in tRNA modification; wybutosine-tRNA(Phe) biosynthesis. In terms of biological role, probable component of the wybutosine biosynthesis pathway. Wybutosine is a hyper modified guanosine with a tricyclic base found at the 3'-position adjacent to the anticodon of eukaryotic phenylalanine tRNA. Catalyzes the condensation of N-methylguanine with 2 carbon atoms from pyruvate to form the tricyclic 4-demethylwyosine, an intermediate in wybutosine biosynthesis. This chain is S-adenosyl-L-methionine-dependent tRNA 4-demethylwyosine synthase (TYW1), found in Oryza sativa subsp. japonica (Rice).